The chain runs to 94 residues: Pyrimidine/purine nucleoside phosphorylase (94 aa).

It belongs to the nucleoside phosphorylase PpnP family.

The enzyme catalyses a purine D-ribonucleoside + phosphate = a purine nucleobase + alpha-D-ribose 1-phosphate. The catalysed reaction is adenosine + phosphate = alpha-D-ribose 1-phosphate + adenine. It carries out the reaction cytidine + phosphate = cytosine + alpha-D-ribose 1-phosphate. It catalyses the reaction guanosine + phosphate = alpha-D-ribose 1-phosphate + guanine. The enzyme catalyses inosine + phosphate = alpha-D-ribose 1-phosphate + hypoxanthine. The catalysed reaction is thymidine + phosphate = 2-deoxy-alpha-D-ribose 1-phosphate + thymine. It carries out the reaction uridine + phosphate = alpha-D-ribose 1-phosphate + uracil. It catalyses the reaction xanthosine + phosphate = alpha-D-ribose 1-phosphate + xanthine. In terms of biological role, catalyzes the phosphorolysis of diverse nucleosides, yielding D-ribose 1-phosphate and the respective free bases. Can use uridine, adenosine, guanosine, cytidine, thymidine, inosine and xanthosine as substrates. Also catalyzes the reverse reactions. This chain is Pyrimidine/purine nucleoside phosphorylase, found in Pseudomonas fluorescens (strain ATCC BAA-477 / NRRL B-23932 / Pf-5).